The sequence spans 84 residues: uncharacterized protein (84 aa).

Residues 5–31 (KIQEIINELDNLMNRERKYIELVATVE) adopt a coiled-coil conformation.

This is an uncharacterized protein from Methanocaldococcus jannaschii (strain ATCC 43067 / DSM 2661 / JAL-1 / JCM 10045 / NBRC 100440) (Methanococcus jannaschii).